The following is a 643-amino-acid chain: Extracellular metalloproteinase 4 (643 aa).

An N-terminal signal peptide occupies residues 1 to 18 (MHGLLLAGLLALPLNVLA). Positions 19–254 (HPTESHSSGI…VHSVVDYVSA (236 aa)) are excised as a propeptide. Positions 47-57 (TKSDAVPKQDD) are enriched in basic and acidic residues. Residues 47-71 (TKSDAVPKQDDESFTTSSTGDDNVS) are disordered. A compositionally biased stretch (polar residues) spans 60 to 71 (FTTSSTGDDNVS). Residues Asn-271 and Asn-420 are each glycosylated (N-linked (GlcNAc...) asparagine). His-437 is a Zn(2+) binding site. Residue Glu-438 is part of the active site. His-441 is a binding site for Zn(2+). A glycan (N-linked (GlcNAc...) asparagine) is linked at Asn-510.

It belongs to the peptidase M36 family. Requires Zn(2+) as cofactor.

The protein resides in the secreted. Functionally, secreted metalloproteinase probably acting as a virulence factor. This is Extracellular metalloproteinase 4 (MEP4) from Trichophyton equinum (Horse ringworm fungus).